The chain runs to 422 residues: Testin (422 aa).

The 108-residue stretch at Met92–Asp199 folds into the PET domain. Disordered stretches follow at residues Gln135–Ser162 and Leu194–Ser226. A compositionally biased stretch (basic and acidic residues) spans Leu194–Asp212. LIM zinc-binding domains lie at Tyr234–Glu297, Pro299–Val359, and Gln362–Ser422.

The protein belongs to the prickle / espinas / testin family. As to quaternary structure, interacts via LIM domain 1 with ZYX. Interacts (via LIM domain 3) with ENAH and VASP. Interacts with ALKBH4, talin, actin, alpha-actinin, GRIP1 and PXN. Interacts (via LIM domain 2) with ACTL7A (via N-terminus). Heterodimer with ACTL7A; the heterodimer interacts with ENAH to form a heterotrimer.

It localises to the cytoplasm. The protein resides in the cell junction. It is found in the focal adhesion. In terms of biological role, scaffold protein that may play a role in cell adhesion, cell spreading and in the reorganization of the actin cytoskeleton. Plays a role in the regulation of cell proliferation. May act as a tumor suppressor. This chain is Testin (TES), found in Monodelphis domestica (Gray short-tailed opossum).